Reading from the N-terminus, the 150-residue chain is Ribonuclease H (150 aa).

Residues 3–144 (GEDIVEIYTD…ADALARQGMA (142 aa)) form the RNase H type-1 domain. Mg(2+) contacts are provided by Asp12, Glu50, Asp72, and Asp136.

Belongs to the RNase H family. In terms of assembly, monomer. Requires Mg(2+) as cofactor.

Its subcellular location is the cytoplasm. It carries out the reaction Endonucleolytic cleavage to 5'-phosphomonoester.. Functionally, endonuclease that specifically degrades the RNA of RNA-DNA hybrids. This chain is Ribonuclease H, found in Parvibaculum lavamentivorans (strain DS-1 / DSM 13023 / NCIMB 13966).